The following is a 631-amino-acid chain: uncharacterized protein (631 aa).

Polar residues predominate over residues 1–19; the sequence is MSKMGSSSMGELQDGITQE. Positions 1–92 are disordered; that stretch reads MSKMGSSSMG…EENYPRLQTT (92 aa). Positions 67–76 are enriched in basic residues; it reads KKKKKKKLKK. Residues 277 to 426 form the Exonuclease domain; it reads LAIDCEMVRT…EDALACVDLL (150 aa). The span at 517–526 shows a compositional bias: polar residues; that stretch reads ANRNTKQENN. The disordered stretch occupies residues 517 to 540; sequence ANRNTKQENNSDTDTENDSVEEDQ. The span at 527–540 shows a compositional bias: acidic residues; it reads SDTDTENDSVEEDQ.

This sequence belongs to the REXO1/REXO3 family.

The protein resides in the nucleus. This is an uncharacterized protein from Schizosaccharomyces pombe (strain 972 / ATCC 24843) (Fission yeast).